The following is a 69-amino-acid chain: MNFTKLFVVFAVVLVAFAGQSEAGWRKRVFKPVEKFGQRVRDAGVQGIAIAQQGANVLATARGGPPQQG.

Residues 1–23 (MNFTKLFVVFAVVLVAFAGQSEA) form the signal peptide. Gln-68 is modified (glutamine amide).

Following bacterial infection, expressed in fat body, trachea and muscle.

It localises to the secreted. Antimicrobial peptide active against Gram-negative bacteria E.coli KCCM 11234 (MIC&lt;=1.03 uM), E.aerogenes KCCM 12177 (MIC&lt;=2.07 uM) and P.aeruginosa KCCM 11328 (MIC&lt;=2.07 uM). Not active against various Gram-positive bacteria at concentrations up to 4.14 uM. This Hermetia illucens (Black soldier fly) protein is Cecropin-like peptide 1.